The primary structure comprises 101 residues: Ubiquitin-related modifier 1 (101 aa).

Gly-101 carries the post-translational modification 1-thioglycine. Gly-101 participates in a covalent cross-link: Glycyl lysine isopeptide (Gly-Lys) (interchain with K-? in acceptor proteins).

This sequence belongs to the URM1 family. Post-translationally, C-terminal thiocarboxylation occurs in 2 steps, it is first acyl-adenylated (-COAMP) via the hesA/moeB/thiF part of the MOCS3 homolog, then thiocarboxylated (-COSH) via the rhodanese domain of the MOCS3 homolog.

It localises to the cytoplasm. The protein operates within tRNA modification; 5-methoxycarbonylmethyl-2-thiouridine-tRNA biosynthesis. Acts as a sulfur carrier required for 2-thiolation of mcm(5)S(2)U at tRNA wobble positions of cytosolic tRNA(Lys), tRNA(Glu) and tRNA(Gln). Serves as sulfur donor in tRNA 2-thiolation reaction by being thiocarboxylated (-COSH) at its C-terminus by MOCS3. The sulfur is then transferred to tRNA to form 2-thiolation of mcm(5)S(2)U. Also acts as a ubiquitin-like protein (UBL) that is covalently conjugated via an isopeptide bond to lysine residues of target proteins. The thiocarboxylated form serves as substrate for conjugation and oxidative stress specifically induces the formation of UBL-protein conjugates. The protein is Ubiquitin-related modifier 1 of Gallus gallus (Chicken).